A 375-amino-acid chain; its full sequence is DNA replication and repair protein RecF (375 aa).

30–37 (GENAQGKT) provides a ligand contact to ATP.

This sequence belongs to the RecF family.

Its subcellular location is the cytoplasm. Functionally, the RecF protein is involved in DNA metabolism; it is required for DNA replication and normal SOS inducibility. RecF binds preferentially to single-stranded, linear DNA. It also seems to bind ATP. This Bacillus cereus (strain ZK / E33L) protein is DNA replication and repair protein RecF.